Reading from the N-terminus, the 147-residue chain is Cyanate hydratase (147 aa).

Catalysis depends on residues arginine 88, glutamate 91, and serine 114.

Belongs to the cyanase family.

The enzyme catalyses cyanate + hydrogencarbonate + 3 H(+) = NH4(+) + 2 CO2. Its function is as follows. Catalyzes the reaction of cyanate with bicarbonate to produce ammonia and carbon dioxide. The sequence is that of Cyanate hydratase from Polynucleobacter asymbioticus (strain DSM 18221 / CIP 109841 / QLW-P1DMWA-1) (Polynucleobacter necessarius subsp. asymbioticus).